The sequence spans 170 residues: Mediator of RNA polymerase II transcription subunit 10 (170 aa).

This sequence belongs to the Mediator complex subunit 10 family. In terms of assembly, component of the Mediator complex.

It localises to the nucleus. Its function is as follows. Component of the Mediator complex, a coactivator involved in the regulated transcription of nearly all RNA polymerase II-dependent genes. Mediator functions as a bridge to convey information from gene-specific regulatory proteins to the basal RNA polymerase II transcription machinery. Mediator is recruited to promoters by direct interactions with regulatory proteins and serves as a scaffold for the assembly of a functional preinitiation complex with RNA polymerase II and the general transcription factors. This is Mediator of RNA polymerase II transcription subunit 10 (NUT2) from Candida albicans (strain SC5314 / ATCC MYA-2876) (Yeast).